Reading from the N-terminus, the 620-residue chain is Mitochondrial Rho GTPase 2 (620 aa).

The Cytoplasmic segment spans residues 1-594; that stretch reads MRRDVRILLL…ELHPTSFWLR (594 aa). The region spanning 2–168 is the Miro 1 domain; it reads RRDVRILLLG…FYYAQKAVLH (167 aa). Residues Gly-16, Lys-17, Thr-18, and Ser-19 each coordinate GTP. A Mg(2+)-binding site is contributed by Thr-18. Asp-57 is a binding site for Mg(2+). Ser-59 contacts GTP. Residue Lys-96 forms a Glycyl lysine isopeptide (Lys-Gly) (interchain with G-Cter in ubiquitin) linkage. GTP is bound by residues Asn-118, Lys-119, Asp-121, Ala-149, and Lys-150. A Glycyl lysine isopeptide (Lys-Gly) (interchain with G-Cter in ubiquitin) cross-link involves residue Lys-119. A Glycyl lysine isopeptide (Lys-Gly) (interchain with G-Cter in ubiquitin) cross-link involves residue Lys-164. EF-hand domains are found at residues 184–219 and 304–339; these read ACAQALTRIFRLSDQDRDHGLSDEELNAFQKSCFGH and RGYQFVQRMFEKHDQDHDGVLSPTELQNLFSVFSGA. Ca(2+) is bound by residues Asp-197, Asp-199, Asp-201, Glu-208, Asp-317, Asp-319, Asp-321, and Glu-328. A Miro 2 domain is found at 415–578; that stretch reads RSVLMCKVLG…FTQLATMATF (164 aa). The GTP site is built by Gly-427, Gly-429, Lys-430, Ser-431, and Ala-432. Ser-431 is a Mg(2+) binding site. Glu-473 is a Mg(2+) binding site. GTP is bound by residues Lys-527, Asp-529, and Cys-558. A helical; Anchor for type IV membrane protein transmembrane segment spans residues 595 to 617; it reads GVLVAVGTAVAAVLSFSLYRVLV. The Mitochondrial intermembrane segment spans residues 618-620; it reads KSR.

The protein belongs to the mitochondrial Rho GTPase family. As to quaternary structure, homodimer. Interacts with the kinesin-binding proteins TRAK1/OIP106 and TRAK2/GRIF1, forming a link between mitochondria and the trafficking apparatus of the microtubules. Interacts with ARMCX3. Found in a complex with KIF5B, OGT, RHOT1 and TRAK1. Ubiquitinated by PRKN in a PINK1-dependent manner, leading to its degradation. Ubiquitously expressed.

Its subcellular location is the mitochondrion outer membrane. The catalysed reaction is GTP + H2O = GDP + phosphate + H(+). The enzyme catalyses ATP + H2O = ADP + phosphate + H(+). It catalyses the reaction UTP + H2O = UDP + phosphate + H(+). Functionally, atypical mitochondrial nucleoside-triphosphatase (NTPase) involved in mitochondrial trafficking. Probably involved in control of anterograde transport of mitochondria and their subcellular distribution. Can hydrolyze GTP, ATP and UTP. The polypeptide is Mitochondrial Rho GTPase 2 (Rhot2) (Mus musculus (Mouse)).